Consider the following 158-residue polypeptide: MRPRPCSILSLDVGRRRIGLAGCDALGISVTPLAALRRGRFDADLVVLQAHCCERSVQGLVVGLPLDAAGQPTAQAEHCQRYGLRLAAALDLPLAWVNEHSSTWAAGEQFGLKGDRSGRLDSAAAALLLEQWLAEGPELKPAQQTASRSGAGAGDGGS.

The disordered stretch occupies residues 138 to 158 (ELKPAQQTASRSGAGAGDGGS).

The protein belongs to the YqgF nuclease family.

It localises to the cytoplasm. In terms of biological role, could be a nuclease involved in processing of the 5'-end of pre-16S rRNA. In Synechococcus sp. (strain CC9605), this protein is Putative pre-16S rRNA nuclease.